A 320-amino-acid chain; its full sequence is Glutathione synthetase (320 aa).

In terms of domain architecture, ATP-grasp spans 130–315 (KIFTSWFPDL…ITGMLLDYIE (186 aa)). 156–212 (WEKYQDIIIKPLDAMGGANIFRIKKNDPNFSVIVENMTNYERKYCMVQNYLPEIKLG) serves as a coordination point for ATP. Positions 286 and 288 each coordinate Mg(2+).

This sequence belongs to the prokaryotic GSH synthase family. Mg(2+) serves as cofactor. Mn(2+) is required as a cofactor.

The enzyme catalyses gamma-L-glutamyl-L-cysteine + glycine + ATP = glutathione + ADP + phosphate + H(+). The protein operates within sulfur metabolism; glutathione biosynthesis; glutathione from L-cysteine and L-glutamate: step 2/2. The protein is Glutathione synthetase of Buchnera aphidicola subsp. Acyrthosiphon pisum (strain APS) (Acyrthosiphon pisum symbiotic bacterium).